Consider the following 78-residue polypeptide: Large ribosomal subunit protein bL28 (78 aa).

Belongs to the bacterial ribosomal protein bL28 family.

The sequence is that of Large ribosomal subunit protein bL28 from Aromatoleum aromaticum (strain DSM 19018 / LMG 30748 / EbN1) (Azoarcus sp. (strain EbN1)).